The sequence spans 451 residues: UPF0210 protein LMOf2365_0563 (451 aa).

The protein belongs to the UPF0210 family. Homodimer.

This is UPF0210 protein LMOf2365_0563 from Listeria monocytogenes serotype 4b (strain F2365).